The sequence spans 316 residues: Putative S-adenosyl-L-methionine-dependent methyltransferase MAB_4606c (316 aa).

S-adenosyl-L-methionine-binding positions include aspartate 137 and 166–167 (DL).

It belongs to the UPF0677 family.

In terms of biological role, exhibits S-adenosyl-L-methionine-dependent methyltransferase activity. The sequence is that of Putative S-adenosyl-L-methionine-dependent methyltransferase MAB_4606c from Mycobacteroides abscessus (strain ATCC 19977 / DSM 44196 / CCUG 20993 / CIP 104536 / JCM 13569 / NCTC 13031 / TMC 1543 / L948) (Mycobacterium abscessus).